The sequence spans 254 residues: Major prion protein (254 aa).

The first 22 residues, 1 to 22 (MANLSYWLLALFVATWTDVGLC), serve as a signal peptide directing secretion. The segment at 23 to 231 (KKRPKPGGWN…SQAYYDGRRS (209 aa)) is interaction with GRB2, ERI3 and SYN1. Residues 25–108 (RPKPGGWNTG…WNKPNKPKTS (84 aa)) form a disordered region. 5 tandem repeats follow at residues 51–59 (PQGGGTWGQ), 60–67 (PHGGGWGQ), 68–75 (PHGGGWGQ), 76–83 (PHGGGWGQ), and 84–91 (PHGGGWGQ). The segment at 51-91 (PQGGGTWGQPHGGGWGQPHGGGWGQPHGGGWGQPHGGGWGQ) is 5 X 8 AA tandem repeats of P-H-G-G-G-W-G-Q. Gly residues predominate over residues 52–95 (QGGGTWGQPHGGGWGQPHGGGWGQPHGGGWGQPHGGGWGQGGGT). H61, G62, G63, H69, G70, G71, H77, G78, G79, H85, G86, and G87 together coordinate Cu(2+). Residues 90-231 (GQGGGTHNQW…SQAYYDGRRS (142 aa)) form a prP27-30 (protease resistant core) region. C179 and C214 form a disulfide bridge. N-linked (GlcNAc...) asparagine glycans are attached at residues N181 and N197. S231 carries the GPI-anchor amidated serine lipid modification. A propeptide spans 232-254 (SAVLFSSPPVILLISFLIFLIVG) (removed in mature form).

It belongs to the prion family. Monomer and homodimer. Has a tendency to aggregate into amyloid fibrils containing a cross-beta spine, formed by a steric zipper of superposed beta-strands. Soluble oligomers may represent an intermediate stage on the path to fibril formation. Copper binding may promote oligomerization. Interacts with GRB2, APP, ERI3/PRNPIP and SYN1. Mislocalized cytosolically exposed PrP interacts with MGRN1; this interaction alters MGRN1 subcellular location and causes lysosomal enlargement. Interacts with KIAA1191.

The protein resides in the cell membrane. It is found in the golgi apparatus. Its primary physiological function is unclear. Has cytoprotective activity against internal or environmental stresses. May play a role in neuronal development and synaptic plasticity. May be required for neuronal myelin sheath maintenance. May play a role in iron uptake and iron homeostasis. Soluble oligomers are toxic to cultured neuroblastoma cells and induce apoptosis (in vitro). Association with GPC1 (via its heparan sulfate chains) targets PRNP to lipid rafts. Also provides Cu(2+) or Zn(2+) for the ascorbate-mediated GPC1 deaminase degradation of its heparan sulfate side chains. The protein is Major prion protein (PRNP) of Nothocricetulus migratorius (Gray dwarf hamster).